We begin with the raw amino-acid sequence, 272 residues long: Petrobactin import ATP-binding protein FpuC (272 aa).

The ABC transporter domain maps to 2-238 (ISVNKVFYAH…EMFQHIFGIE (237 aa)). 34-41 (GPNGSGKS) is an ATP binding site.

This sequence belongs to the ABC transporter superfamily. The complex is composed of two ATP-binding proteins (FpuC), two transmembrane proteins (FpuB) and a solute-binding protein (FpuA).

The protein localises to the cell membrane. It carries out the reaction a Fe(III)-siderophore(out) + ATP + H2O = a Fe(III)-siderophore(in) + ADP + phosphate + H(+). Functionally, part of an ABC transporter complex involved in ferric-petrobactin uptake. Probably responsible for energy coupling to the transport system. This chain is Petrobactin import ATP-binding protein FpuC, found in Bacillus anthracis.